A 400-amino-acid chain; its full sequence is Lysophospholipid transporter LplT (400 aa).

Helical transmembrane passes span 19-39, 53-73, 91-111, 139-159, 164-184, 195-213, 227-247, 257-277, 281-301, 304-324, 352-372, and 373-393; these read VIVAQFLSAFGDNALLFATLA, VLQMVFVGAYILFAPFVGQIA, AGAAGICLGVNPFVGYTLVGI, LMEASTIAAILLGSVAGGVLA, IAALVACALAYAGAVAANLFI, SWRLSAMTRSFFSACVVLW, LFWGAGVTLRFLLVLWVPVAL, YLNAMVAVGIVVGAGAAAKLV, TVSRCMPAGILIGVVVAIFSL, ALLPAYALLLLIGMLGGFFVV, NSAMLLMLGLYSLAVLVGVPA, and VAIGIGFGVLFALAIAALWIW.

It belongs to the major facilitator superfamily. LplT (TC 2.A.1.42) family.

It is found in the cell inner membrane. Its function is as follows. Catalyzes the facilitated diffusion of 2-acyl-glycero-3-phosphoethanolamine (2-acyl-GPE) into the cell. The polypeptide is Lysophospholipid transporter LplT (Salmonella agona (strain SL483)).